The chain runs to 267 residues: MTSFNDGRTVHVVIPARYGSTRLPGKPLVDLEGEPMIVRVHARVRRALPEADIVVAIDDARIAEVLDARGIRFAMTDTGHASGTDRAAEVARVSGWPDTDAVLNVQGDEPLVPTALLQAFAGFCGATAALGVATVACPIGEVALLDEPAIVKVVVDHRGRALYFSRAAIPFCRDGRPADSAGSNGLFLRHIGLYGYTNATLQALSRAAPCELEQLEKLEQLRALWLGMPIDVMRWPDAPPAGIDTPDDVARVVSLLKRQTHDATEPY.

Belongs to the KdsB family.

It localises to the cytoplasm. It carries out the reaction 3-deoxy-alpha-D-manno-oct-2-ulosonate + CTP = CMP-3-deoxy-beta-D-manno-octulosonate + diphosphate. It participates in nucleotide-sugar biosynthesis; CMP-3-deoxy-D-manno-octulosonate biosynthesis; CMP-3-deoxy-D-manno-octulosonate from 3-deoxy-D-manno-octulosonate and CTP: step 1/1. Its pathway is bacterial outer membrane biogenesis; lipopolysaccharide biosynthesis. Functionally, activates KDO (a required 8-carbon sugar) for incorporation into bacterial lipopolysaccharide in Gram-negative bacteria. This chain is 3-deoxy-manno-octulosonate cytidylyltransferase 2, found in Burkholderia ambifaria (strain MC40-6).